The sequence spans 130 residues: Small ribosomal subunit protein uS11c (130 aa).

It belongs to the universal ribosomal protein uS11 family. In terms of assembly, part of the 30S ribosomal subunit.

It localises to the plastid. The chain is Small ribosomal subunit protein uS11c from Aneura mirabilis (Parasitic liverwort).